Here is a 658-residue protein sequence, read N- to C-terminus: Carnitine O-palmitoyltransferase 2, mitochondrial (658 aa).

The N-terminal 26 residues, Met-1–Tyr-26, are a transit peptide targeting the mitochondrion. Residues Ser-27–Leu-179 are Mitochondrial matrix-facing. Residues Asn-180–Asn-209 constitute an intramembrane region (note=Mitochondrial inner membrane). Over Ala-210–Lys-658 the chain is Mitochondrial matrix. The Proton acceptor role is filled by His-373. Gly-453 to Asp-465 serves as a coordination point for CoA. (R)-carnitine-binding residues include Tyr-487, Ser-489, and Thr-500.

It belongs to the carnitine/choline acetyltransferase family.

Its subcellular location is the mitochondrion inner membrane. It carries out the reaction (R)-carnitine + hexadecanoyl-CoA = O-hexadecanoyl-(R)-carnitine + CoA. It catalyses the reaction octanoyl-CoA + (R)-carnitine = O-octanoyl-(R)-carnitine + CoA. The enzyme catalyses decanoyl-CoA + (R)-carnitine = O-decanoyl-(R)-carnitine + CoA. The catalysed reaction is dodecanoyl-CoA + (R)-carnitine = O-dodecanoyl-R-carnitine + CoA. It carries out the reaction tetradecanoyl-CoA + (R)-carnitine = O-tetradecanoyl-(R)-carnitine + CoA. It catalyses the reaction (R)-carnitine + octadecanoyl-CoA = O-octadecanoyl-(R)-carnitine + CoA. The enzyme catalyses eicosanoyl-CoA + (R)-carnitine = O-eicosanoyl-(R)-carnitine + CoA. The catalysed reaction is (9Z)-tetradecenoyl-CoA + (R)-carnitine = O-(9Z)-tetradecenoyl-(R)-carnitine + CoA. It carries out the reaction (5Z)-tetradecenoyl-CoA + (R)-carnitine = O-(5Z)-tetradecenoyl-(R)-carnitine + CoA. It catalyses the reaction (R)-carnitine + (9Z)-octadecenoyl-CoA = O-(9Z)-octadecenoyl-(R)-carnitine + CoA. The enzyme catalyses 4,8-dimethylnonanoyl-CoA + (R)-carnitine = O-4,8-dimethylnonanoyl-(R)-carnitine + CoA. The protein operates within lipid metabolism; fatty acid beta-oxidation. Functionally, involved in the intramitochondrial synthesis of acylcarnitines from accumulated acyl-CoA metabolites. Reconverts acylcarnitines back into the respective acyl-CoA esters that can then undergo beta-oxidation, an essential step for the mitochondrial uptake of long-chain fatty acids and their subsequent beta-oxidation in the mitochondrion. Active with medium (C8-C12) and long-chain (C14-C18) acyl-CoA esters. In Xenopus tropicalis (Western clawed frog), this protein is Carnitine O-palmitoyltransferase 2, mitochondrial (cpt2).